Consider the following 194-residue polypeptide: ATP-dependent Clp protease proteolytic subunit (194 aa).

Residue S98 is the Nucleophile of the active site. The active site involves H123.

Belongs to the peptidase S14 family. In terms of assembly, component of the chloroplastic Clp protease core complex.

Its subcellular location is the plastid. The protein localises to the cyanelle. The catalysed reaction is Hydrolysis of proteins to small peptides in the presence of ATP and magnesium. alpha-casein is the usual test substrate. In the absence of ATP, only oligopeptides shorter than five residues are hydrolyzed (such as succinyl-Leu-Tyr-|-NHMec, and Leu-Tyr-Leu-|-Tyr-Trp, in which cleavage of the -Tyr-|-Leu- and -Tyr-|-Trp bonds also occurs).. Cleaves peptides in various proteins in a process that requires ATP hydrolysis. Has a chymotrypsin-like activity. Plays a major role in the degradation of misfolded proteins. This chain is ATP-dependent Clp protease proteolytic subunit (clpP-A), found in Cyanophora paradoxa.